The sequence spans 314 residues: Phospholipid phosphatase-related protein type 5 (314 aa).

6 helical membrane passes run 5-25, 61-81, 120-140, 194-214, 223-243, and 250-270; these read FSLT…VMLA, IPPV…IIVG, FLGI…AGQV, AALS…TIKA, VLCL…VAEY, and VIAG…CVVN.

The protein belongs to the PA-phosphatase related phosphoesterase family.

It is found in the cell membrane. Its function is as follows. Induces filopodia formation and promotes neurite growth. The protein is Phospholipid phosphatase-related protein type 5 of Xenopus laevis (African clawed frog).